Consider the following 372-residue polypeptide: Putative aminopeptidase SgcX (372 aa).

His-67 and Asp-180 together coordinate a divalent metal cation. Glu-212 acts as the Proton acceptor in catalysis. Glu-213, Asp-235, and His-329 together coordinate a divalent metal cation.

The protein belongs to the peptidase M42 family. It depends on a divalent metal cation as a cofactor.

This is Putative aminopeptidase SgcX (sgcX) from Salmonella typhi.